The sequence spans 255 residues: tRNA (guanine-N(1)-)-methyltransferase (255 aa).

Residues G113 and 133-138 (IGDYVL) each bind S-adenosyl-L-methionine.

This sequence belongs to the RNA methyltransferase TrmD family. As to quaternary structure, homodimer.

The protein localises to the cytoplasm. The catalysed reaction is guanosine(37) in tRNA + S-adenosyl-L-methionine = N(1)-methylguanosine(37) in tRNA + S-adenosyl-L-homocysteine + H(+). Specifically methylates guanosine-37 in various tRNAs. This Enterobacter sp. (strain 638) protein is tRNA (guanine-N(1)-)-methyltransferase.